Here is a 526-residue protein sequence, read N- to C-terminus: Cytochrome P450 monooxygenase 226 (526 aa).

The helical transmembrane segment at 15–35 (FATSYAALTVAAVTLLAALLV) threads the bilayer. 3 N-linked (GlcNAc...) asparagine glycosylation sites follow: Asn-219, Asn-277, and Asn-320. Cys-452 is a heme binding site.

The protein belongs to the cytochrome P450 family. Heme serves as cofactor.

It localises to the membrane. It participates in secondary metabolite biosynthesis. Functionally, cytochrome P450 monooxygenase that is able to use anthracene, carbazole and phenanthrene as substrates for oxidation. These multifunctional properties against a series of polycyclic aromatic hydrocarbons (PAHs) suggest that CYP226 would play important roles, at least in part, in fungal metabolic systems involved in xenobiotic detoxification. The chain is Cytochrome P450 monooxygenase 226 from Postia placenta (strain ATCC 44394 / Madison 698-R) (Brown rot fungus).